The following is a 209-amino-acid chain: Small ribosomal subunit protein uS4 (209 aa).

The span at 1–13 (MSTKSRTRSKTRL) shows a compositional bias: basic residues. Disordered regions lie at residues 1–20 (MSTK…LGIP) and 28–49 (YLEK…QDSD). The S4 RNA-binding domain maps to 95–160 (QRLDALVVRS…TEPFQVAAAG (66 aa)).

Belongs to the universal ribosomal protein uS4 family. In terms of assembly, part of the 30S ribosomal subunit. Contacts protein S5. The interaction surface between S4 and S5 is involved in control of translational fidelity.

One of the primary rRNA binding proteins, it binds directly to 16S rRNA where it nucleates assembly of the body of the 30S subunit. In terms of biological role, with S5 and S12 plays an important role in translational accuracy. This chain is Small ribosomal subunit protein uS4, found in Clavibacter sepedonicus (Clavibacter michiganensis subsp. sepedonicus).